A 2896-amino-acid polypeptide reads, in one-letter code: Hemocyanin G-type, units Oda to Odg (2896 aa).

Positions 1-419 (NLIRKDVDAL…ADMVVVDKTG (419 aa)) are functional unit Oda. Histidine 41 contacts Cu cation. Cysteine 47 and cysteine 57 are joined by a disulfide. Residues 58–60 (CLH) constitute a cross-link (2'-(S-cysteinyl)-histidine (Cys-His)). Residues histidine 60, histidine 69, histidine 178, histidine 182, and histidine 209 each coordinate Cu cation. 2 cysteine pairs are disulfide-bonded: cysteine 168-cysteine 234 and cysteine 321-cysteine 333. N-linked (GlcNAc...) asparagine glycosylation is present at asparagine 386. Positions 420-834 (LNVRKDLQSL…KESGVVFDEL (415 aa)) are functional unit Odb. A Cu cation-binding site is contributed by histidine 460. The cysteines at positions 466 and 477 are disulfide-linked. Positions 478 to 480 (CVH) form a cross-link, 2'-(S-cysteinyl)-histidine (Cys-His). 5 residues coordinate Cu cation: histidine 480, histidine 489, histidine 601, histidine 605, and histidine 632. A disulfide bridge connects residues cysteine 591 and cysteine 657. Asparagine 804 carries N-linked (GlcNAc...) asparagine glycosylation. A functional unit Odc region spans residues 835–1254 (YRSRRDVSSL…GIWVEPVTSA (420 aa)). Histidine 875 serves as a coordination point for Cu cation. Cysteine 881 and cysteine 892 are oxidised to a cystine. Residues 893 to 895 (CHH) constitute a cross-link (2'-(S-cysteinyl)-histidine (Cys-His)). Cu cation-binding residues include histidine 895, histidine 904, histidine 1013, histidine 1017, histidine 1044, and histidine 1292. Cysteine 1003 and cysteine 1070 form a disulfide bridge. Positions 1255-1667 (NRIRKNLNAL…ADIKSEEGNE (413 aa)) are functional unit Odd. Cysteine 1298 and cysteine 1309 form a disulfide bridge. A cross-link (2'-(S-cysteinyl)-histidine (Cys-His)) is located at residues 1310-1312 (CIH). Cu cation contacts are provided by histidine 1312, histidine 1321, histidine 1425, histidine 1429, and histidine 1456. The cysteines at positions 1415 and 1482 are disulfide-linked. Asparagine 1496 is a glycosylation site (N-linked (GlcNAc...) asparagine). A disulfide bond links cysteine 1571 and cysteine 1581. Asparagine 1634 carries N-linked (GlcNAc...) asparagine glycosylation. The segment at 1668–2085 (YLVRKNVERL…NEDADIDTPL (418 aa)) is functional unit Ode. Histidine 1708 provides a ligand contact to Cu cation. A disulfide bridge links cysteine 1714 with cysteine 1725. Residues 1726 to 1728 (CLH) constitute a cross-link (2'-(S-cysteinyl)-histidine (Cys-His)). The Cu cation site is built by histidine 1728, histidine 1737, histidine 1849, histidine 1853, and histidine 1880. Disulfide bonds link cysteine 1839/cysteine 1906 and cysteine 1997/cysteine 2003. A glycan (N-linked (GlcNAc...) asparagine) is linked at asparagine 2055. A functional unit Odf region spans residues 2086–2502 (NHIRRNVESL…REVHKKTVGD (417 aa)). Cu cation is bound at residue histidine 2126. Cysteine 2131 and cysteine 2141 are joined by a disulfide. Positions 2142-2144 (CLH) form a cross-link, 2'-(S-cysteinyl)-histidine (Cys-His). 2 residues coordinate Cu cation: histidine 2144 and histidine 2153. Residue asparagine 2201 is glycosylated (N-linked (GlcNAc...) asparagine). 2 disulfides stabilise this stretch: cysteine 2252–cysteine 2319 and cysteine 2406–cysteine 2411. The Cu cation site is built by histidine 2262, histidine 2266, and histidine 2293. The segment at 2503-2896 (AIIRKNVNSL…VFLAPAKTTH (394 aa)) is functional unit Odg. Cu cation is bound at residue histidine 2543. Cysteine 2549 and cysteine 2559 are joined by a disulfide. The N-linked (GlcNAc...) asparagine glycan is linked to asparagine 2553. A cross-link (2'-(S-cysteinyl)-histidine (Cys-His)) is located at residues 2560–2562 (CQH). Cu cation is bound by residues histidine 2562, histidine 2571, histidine 2671, histidine 2675, and histidine 2702. Cystine bridges form between cysteine 2661–cysteine 2728 and cysteine 2815–cysteine 2821.

This sequence belongs to the tyrosinase family. Hemocyanin subfamily. In terms of assembly, decamers of large identical subunits (350 kDa), each containing 7 globular oxygen-binding functional units: ODA, ODB, ODC, ODD, ODE, ODF, and ODG. Decamer formation requires the presence of magnesium ions. It depends on Cu(2+) as a cofactor.

In terms of biological role, hemocyanins are copper-containing oxygen carriers occurring freely dissolved in the hemolymph of many mollusks and arthropods. This Enteroctopus dofleini (North Pacific giant octopus) protein is Hemocyanin G-type, units Oda to Odg (ODHCY).